The chain runs to 722 residues: Homeobox-leucine zipper protein HDG11 (722 aa).

Gly residues predominate over residues 1–19; the sequence is MSFVVGVGGSGSGSGGDGG. Positions 1 to 42 are disordered; the sequence is MSFVVGVGGSGSGSGGDGGGSHHHDGSETDRKKKRYHRHTAQ. A compositionally biased stretch (basic and acidic residues) spans 20–31; that stretch reads GSHHHDGSETDR. A DNA-binding region (homeobox) is located at residues 32–91; it reads KKKRYHRHTAQQIQRLESSFKECPHPDEKQRNQLSRELGLAPRQIKFWFQNRRTQLKAQH. Positions 81-161 form a coiled coil; it reads QNRRTQLKAQ…LERMSTIASK (81 aa). The START domain occupies 227 to 460; it reads SDMDKPIMTG…LQRMCERFAS (234 aa).

This sequence belongs to the HD-ZIP homeobox family. Class IV subfamily. As to quaternary structure, interacts with BBM. Expressed in apical meristems and young epidermal tissue including trichomes and stipules. Expressed in lateral root tips, the L1 layer of apical inflorescence meristems and early flower primordia, carpel and petal epidermis, stigma papillae, ovule primordia, nucellus and embryo.

Its subcellular location is the nucleus. Functionally, transcription factor which acts as a positive regulator of drought stress tolerance. Can transactivate CIPK3, NCED3 and ERECTA. Transactivates several cell-wall-loosening protein genes by directly binding to HD motifs in their promoters. These target genes play important roles in coordinating cell-wall extensibility with root development and growth. Transactivates CYP74A/AOS, AOC3, OPR3 and 4CLL5/OPCL1 genes by directly binding to HD motifs in their promoters. These target genes are involved in jasmonate (JA) biosynthesis, and JA signaling affects root architecture by activating auxin signaling, which promotes lateral root formation. Acts as a negative regulator of trichome branching. Required for the establishment of giant cell identity on the abaxial side of sepals. Seems to promote cell differentiation. May regulate cell differentiation and proliferation during root and shoot meristem development. In Arabidopsis thaliana (Mouse-ear cress), this protein is Homeobox-leucine zipper protein HDG11.